We begin with the raw amino-acid sequence, 255 residues long: Lactose phosphotransferase system repressor (255 aa).

One can recognise an HTH deoR-type domain in the interval 3–58; the sequence is KKRRLEKILDMLKIDGTITIKEIIDELDISDMTARRDLDALEADGLLTRTHGGAQL. Positions 20–39 form a DNA-binding region, H-T-H motif; that stretch reads ITIKEIIDELDISDMTARRD.

Its function is as follows. Repressor of the lactose catabolism operon. Galactose-6-phosphate is the inducer. The chain is Lactose phosphotransferase system repressor (lacR) from Lactococcus lactis subsp. lactis (Streptococcus lactis).